The following is a 1161-amino-acid chain: Lateral signaling target protein 2 homolog (1161 aa).

6 disordered regions span residues 417-510, 583-831, 890-918, 935-978, 992-1014, and 1029-1095; these read ATGS…EVDD, AAGS…PTQS, MNSSPPEPDEPPEPSGSEEESKDSQHNHP, DQQN…SVES, SSPVGAGGAGGGGMVGGSRTGQE, and GKAS…EPPR. Over residues 419–429 the composition is skewed to gly residues; sequence GSSGFGSGRGG. A compositionally biased stretch (basic residues) spans 438-453; the sequence is PKQRHNQAHLRQRGAP. Positions 468–487 are enriched in basic and acidic residues; the sequence is GDDREPVVEEDNNNHLRKEI. Acidic residues predominate over residues 488–510; the sequence is EEEDVDDDMEEEEEDEEEDEVDD. Positions 583-601 are enriched in low complexity; sequence AAGSGGQQQQQQQQQLIDS. Acidic residues predominate over residues 669-704; sequence SDYEEADVDDEPDDVDADDDDEEEDDVVGEVEEQND. Over residues 728–742 the composition is skewed to basic residues; the sequence is KAARNHRKSSHHRPR. Over residues 743-757 the composition is skewed to low complexity; it reads PSTSSSSSSAAYRNK. The span at 758-773 shows a compositional bias: basic residues; the sequence is SQSHQHHHHHHHHHHH. 2 stretches are compositionally biased toward low complexity: residues 781 to 800 and 807 to 831; these read GTSSVVSTITTSNNSTSNGS and MQQQHQQHQQQRNSSSSCDTSPTQS. Over residues 896–910 the composition is skewed to acidic residues; the sequence is EPDEPPEPSGSEEES. Polar residues-rich tracts occupy residues 935-948 and 956-967; these read DQQNHSGGSSQSIY and EQDSVFGSSGDS. Gly residues predominate over residues 996–1010; sequence GAGGAGGGGMVGGSR. A compositionally biased stretch (low complexity) spans 1054–1065; it reads SRSSPSSPVNSN. Residues 1081-1094 are compositionally biased toward basic and acidic residues; sequence TAHEQQRRMPEEPP. Residues 1099–1159 form an FYVE-type zinc finger; sequence DCDAPRCMAC…VCRDCYIHEV (61 aa). Zn(2+) contacts are provided by cysteine 1105, cysteine 1108, cysteine 1121, cysteine 1124, cysteine 1129, cysteine 1132, cysteine 1151, and cysteine 1154.

It belongs to the lst-2 family.

Negative regulator of epidermal growth factor receptor (EGFR) signaling. In Anopheles gambiae (African malaria mosquito), this protein is Lateral signaling target protein 2 homolog.